The primary structure comprises 3390 residues: Genome polyprotein (3390 aa).

The segment at methionine 1 to methionine 15 is interaction with host EXOC1. Residues methionine 1–lysine 100 lie on the Cytoplasmic side of the membrane. The hydrophobic; homodimerization of capsid protein C stretch occupies residues leucine 37–phenylalanine 72. Positions threonine 101–alanine 114 are cleaved as a propeptide — ER anchor for the capsid protein C, removed in mature form by serine protease NS3. Residues threonine 101–threonine 118 form a helical membrane-spanning segment. At serine 119–arginine 243 the chain is on the extracellular side. N-linked (GlcNAc...) asparagine; by host glycosylation occurs at asparagine 183. A helical membrane pass occupies residues histidine 244–glutamine 264. Lysine 265 is a topological domain (cytoplasmic). A helical transmembrane segment spans residues valine 266–threonine 280. Over methionine 281 to threonine 723 the chain is Extracellular. Intrachain disulfides connect cysteine 283–cysteine 310, cysteine 340–cysteine 401, cysteine 354–cysteine 385, and cysteine 372–cysteine 396. Asparagine 347 carries N-linked (GlcNAc...) asparagine; by host glycosylation. A fusion peptide region spans residues aspartate 378–glycine 391. Asparagine 433 carries an N-linked (GlcNAc...) asparagine; by host glycan. 2 disulfide bridges follow: cysteine 463/cysteine 563 and cysteine 580/cysteine 611. Residues alanine 724–isoleucine 744 traverse the membrane as a helical segment. The Cytoplasmic portion of the chain corresponds to glycine 745 to asparagine 750. A helical membrane pass occupies residues threonine 751–valine 771. Topologically, residues glutamine 772–methionine 1193 are extracellular. 6 disulfides stabilise this stretch: cysteine 777–cysteine 788, cysteine 828–cysteine 916, cysteine 952–cysteine 996, cysteine 1053–cysteine 1102, cysteine 1064–cysteine 1086, and cysteine 1085–cysteine 1089. Residues asparagine 903 and asparagine 980 are each glycosylated (N-linked (GlcNAc...) asparagine; by host). N-linked (GlcNAc...) asparagine; by host glycans are attached at residues asparagine 1132 and asparagine 1188. Residues glycine 1194 to leucine 1218 form a helical membrane-spanning segment. At arginine 1219–arginine 1224 the chain is on the cytoplasmic side. The chain crosses the membrane as a helical span at residues glutamate 1225–glutamate 1243. The Lumenal segment spans residues aspartate 1244–threonine 1267. The chain crosses the membrane as a helical span at residues tyrosine 1268–valine 1288. A topological domain (cytoplasmic) is located at residue alanine 1289. A helical membrane pass occupies residues tryptophan 1290–serine 1308. The Lumenal portion of the chain corresponds to serine 1309–aspartate 1315. A helical transmembrane segment spans residues tryptophan 1316–leucine 1336. Over lysine 1337–serine 1344 the chain is Cytoplasmic. A helical transmembrane segment spans residues tryptophan 1345 to leucine 1365. The Lumenal portion of the chain corresponds to arginine 1366 to aspartate 1368. Residues valine 1369 to glycine 1389 traverse the membrane as a helical segment. The Cytoplasmic portion of the chain corresponds to threonine 1390–lysine 1443. The interval valine 1396–glutamate 1435 is interacts with and activates NS3 protease. Residues threonine 1444 to tryptophan 1464 constitute an intramembrane region (helical). The Cytoplasmic portion of the chain corresponds to histidine 1465–threonine 2146. A Peptidase S7 domain is found at serine 1474 to glutamate 1651. Active-site charge relay system; for serine protease NS3 activity residues include histidine 1524, aspartate 1548, and serine 1608. In terms of domain architecture, Helicase ATP-binding spans glutamate 1654–glutamate 1810. Residues lysine 1658–asparagine 1661 form an important for RNA-binding region. Leucine 1667–threonine 1674 is an ATP binding site. The short motif at aspartate 1758 to histidine 1761 is the DEAH box element. The Helicase C-terminal domain maps to glycine 1821–glutamate 1986. The residue at position 1862 (lysine 1862) is an N6-acetyllysine; by host. Residues leucine 2147–glycine 2167 form a helical membrane-spanning segment. The Lumenal portion of the chain corresponds to lysine 2168 to glycine 2169. An intramembrane region (helical) is located at residues isoleucine 2170 to alanine 2190. Aspartate 2191 is a topological domain (lumenal). Residues valine 2192–isoleucine 2212 form a helical membrane-spanning segment. The Cytoplasmic portion of the chain corresponds to proline 2213 to alanine 2227. The chain crosses the membrane as a helical span at residues tyrosine 2228–leucine 2248. The Lumenal segment spans residues glutamate 2249–aspartate 2273. The helical intramembrane region spans leucine 2274 to leucine 2294. The Lumenal segment spans residues arginine 2295–valine 2305. 2 N-linked (GlcNAc...) asparagine; by host glycosylation sites follow: asparagine 2300 and asparagine 2304. Residues serine 2306 to isoleucine 2326 constitute an intramembrane region (helical). Over serine 2327–proline 2346 the chain is Lumenal. The helical transmembrane segment at leucine 2347–leucine 2367 threads the bilayer. Over glutamine 2368 to glutamine 2412 the chain is Cytoplasmic. A helical membrane pass occupies residues valine 2413 to cysteine 2433. Topologically, residues glutamate 2434 to threonine 2458 are lumenal. A glycan (N-linked (GlcNAc...) asparagine; by host) is linked at asparagine 2456. A helical transmembrane segment spans residues isoleucine 2459 to phenylalanine 2479. Over serine 2480–tryptophan 3390 the chain is Cytoplasmic. The 262-residue stretch at threonine 2492–histidine 2753 folds into the mRNA cap 0-1 NS5-type MT domain. Serine 2546 is an S-adenosyl-L-methionine binding site. Phosphoserine is present on serine 2546. Lysine 2551 serves as the catalytic For 2'-O-MTase activity. The SUMO-interacting motif signature appears at valine 2567 to leucine 2570. S-adenosyl-L-methionine contacts are provided by glycine 2576, tryptophan 2577, threonine 2594, lysine 2595, aspartate 2621, and valine 2622. The active-site For 2'-O-MTase activity is the aspartate 2636. An S-adenosyl-L-methionine-binding site is contributed by isoleucine 2637. Active-site for 2'-O-MTase activity residues include lysine 2670 and glutamate 2706. Tyrosine 2708 serves as a coordination point for S-adenosyl-L-methionine. Zn(2+)-binding residues include glutamate 2927, histidine 2931, cysteine 2936, and cysteine 2939. The RdRp catalytic domain occupies alanine 3018–leucine 3168. 3 residues coordinate Zn(2+): histidine 3202, cysteine 3218, and cysteine 3337.

It in the N-terminal section; belongs to the class I-like SAM-binding methyltransferase superfamily. mRNA cap 0-1 NS5-type methyltransferase family. In terms of assembly, homodimer. Interacts (via N-terminus) with host EXOC1 (via C-terminus); this interaction results in EXOC1 degradation through the proteasome degradation pathway. Forms heterodimers with envelope protein E in the endoplasmic reticulum and Golgi. As to quaternary structure, homodimer; in the endoplasmic reticulum and Golgi. Interacts with protein prM. Interacts with non-structural protein 1. In terms of assembly, homodimer; Homohexamer when secreted. Interacts with envelope protein E. Interacts (via N-terminus) with serine protease NS3. As to quaternary structure, forms a heterodimer with serine protease NS3. May form homooligomers. In terms of assembly, forms a heterodimer with NS2B. Interacts with NS4B. Interacts with unphosphorylated RNA-directed RNA polymerase NS5; this interaction stimulates RNA-directed RNA polymerase NS5 guanylyltransferase activity. Interacts with host MAVS; this interaction inhibits the synthesis of IFN-beta. Interacts with host AUP1; the interaction occurs in the presence of Dengue virus NS4B and induces lipophagy which facilitates production of virus progeny particles. As to quaternary structure, interacts with serine protease NS3. In terms of assembly, homodimer. Interacts with host STAT2; this interaction inhibits the phosphorylation of the latter, and, when all viral proteins are present (polyprotein), targets STAT2 for degradation. Interacts with serine protease NS3. Specific enzymatic cleavages in vivo yield mature proteins. Cleavages in the lumen of endoplasmic reticulum are performed by host signal peptidase, whereas cleavages in the cytoplasmic side are performed by serine protease NS3. Signal cleavage at the 2K-4B site requires a prior NS3 protease-mediated cleavage at the 4A-2K site. Post-translationally, cleaved in post-Golgi vesicles by a host furin, releasing the mature small envelope protein M, and peptide pr. This cleavage is incomplete as up to 30% of viral particles still carry uncleaved prM. In terms of processing, N-glycosylated. N-glycosylated. The excreted form is glycosylated and this is required for efficient secretion of the protein from infected cells. Post-translationally, acetylated by host KAT5. Acetylation modulates NS3 RNA-binding and unwinding activities and plays an important positive role for viral replication. In terms of processing, sumoylation of RNA-directed RNA polymerase NS5 increases NS5 protein stability allowing proper viral RNA replication. Phosphorylated on serines residues. This phosphorylation may trigger NS5 nuclear localization.

The protein resides in the virion. The protein localises to the host nucleus. Its subcellular location is the host cytoplasm. It localises to the host perinuclear region. It is found in the secreted. The protein resides in the virion membrane. The protein localises to the host endoplasmic reticulum membrane. Its subcellular location is the host mitochondrion. It catalyses the reaction Selective hydrolysis of -Xaa-Xaa-|-Yaa- bonds in which each of the Xaa can be either Arg or Lys and Yaa can be either Ser or Ala.. It carries out the reaction RNA(n) + a ribonucleoside 5'-triphosphate = RNA(n+1) + diphosphate. The enzyme catalyses a ribonucleoside 5'-triphosphate + H2O = a ribonucleoside 5'-diphosphate + phosphate + H(+). The catalysed reaction is ATP + H2O = ADP + phosphate + H(+). It catalyses the reaction a 5'-end (5'-triphosphoguanosine)-ribonucleoside in mRNA + S-adenosyl-L-methionine = a 5'-end (N(7)-methyl 5'-triphosphoguanosine)-ribonucleoside in mRNA + S-adenosyl-L-homocysteine. It carries out the reaction a 5'-end (N(7)-methyl 5'-triphosphoguanosine)-ribonucleoside in mRNA + S-adenosyl-L-methionine = a 5'-end (N(7)-methyl 5'-triphosphoguanosine)-(2'-O-methyl-ribonucleoside) in mRNA + S-adenosyl-L-homocysteine + H(+). Plays a role in virus budding by binding to the cell membrane and gathering the viral RNA into a nucleocapsid that forms the core of a mature virus particle. During virus entry, may induce genome penetration into the host cytoplasm after hemifusion induced by the surface proteins. Can migrate to the cell nucleus where it modulates host functions. Overcomes the anti-viral effects of host EXOC1 by sequestering and degrading the latter through the proteasome degradation pathway. Functionally, inhibits RNA silencing by interfering with host Dicer. Its function is as follows. Prevents premature fusion activity of envelope proteins in trans-Golgi by binding to envelope protein E at pH6.0. After virion release in extracellular space, gets dissociated from E dimers. In terms of biological role, acts as a chaperone for envelope protein E during intracellular virion assembly by masking and inactivating envelope protein E fusion peptide. prM is the only viral peptide matured by host furin in the trans-Golgi network probably to avoid catastrophic activation of the viral fusion activity in acidic Golgi compartment prior to virion release. prM-E cleavage is inefficient, and many virions are only partially matured. These uncleaved prM would play a role in immune evasion. May play a role in virus budding. Exerts cytotoxic effects by activating a mitochondrial apoptotic pathway through M ectodomain. May display a viroporin activity. Functionally, binds to host cell surface receptor and mediates fusion between viral and cellular membranes. Envelope protein is synthesized in the endoplasmic reticulum in the form of heterodimer with protein prM. They play a role in virion budding in the ER, and the newly formed immature particle is covered with 60 spikes composed of heterodimer between precursor prM and envelope protein E. The virion is transported to the Golgi apparatus where the low pH causes dissociation of PrM-E heterodimers and formation of E homodimers. prM-E cleavage is inefficient, and many virions are only partially matured. These uncleaved prM would play a role in immune evasion. Its function is as follows. Involved in immune evasion, pathogenesis and viral replication. Once cleaved off the polyprotein, is targeted to three destinations: the viral replication cycle, the plasma membrane and the extracellular compartment. Essential for viral replication. Required for formation of the replication complex and recruitment of other non-structural proteins to the ER-derived membrane structures. Excreted as a hexameric lipoparticle that plays a role against host immune response. Antagonizing the complement function. Binds to the host macrophages and dendritic cells. Inhibits signal transduction originating from Toll-like receptor 3 (TLR3). In terms of biological role, disrupts the host endothelial glycocalyx layer of host pulmonary microvascular endothelial cells, inducing degradation of sialic acid and shedding of heparan sulfate proteoglycans. NS1 induces expression of sialidases, heparanase, and activates cathepsin L, which activates heparanase via enzymatic cleavage. These effects are probably linked to the endothelial hyperpermeability observed in severe dengue disease. Component of the viral RNA replication complex that functions in virion assembly and antagonizes the host immune response. Functionally, required cofactor for the serine protease function of NS3. May have membrane-destabilizing activity and form viroporins. Its function is as follows. Displays three enzymatic activities: serine protease, NTPase and RNA helicase. NS3 serine protease, in association with NS2B, performs its autocleavage and cleaves the polyprotein at dibasic sites in the cytoplasm: C-prM, NS2A-NS2B, NS2B-NS3, NS3-NS4A, NS4A-2K and NS4B-NS5. NS3 RNA helicase binds RNA and unwinds dsRNA in the 3' to 5' direction. In terms of biological role, regulates the ATPase activity of the NS3 helicase activity. NS4A allows NS3 helicase to conserve energy during unwinding. Plays a role in the inhibition of the host innate immune response. Interacts with host MAVS and thereby prevents the interaction between RIGI and MAVS. In turn, IFN-beta production is impaired. Interacts with host AUP1 which mediates induction of lipophagy in host cells and facilitates production of virus progeny particles. Functions as a signal peptide for NS4B and is required for the interferon antagonism activity of the latter. Functionally, induces the formation of ER-derived membrane vesicles where the viral replication takes place. Inhibits interferon (IFN)-induced host STAT1 phosphorylation and nuclear translocation, thereby preventing the establishment of cellular antiviral state by blocking the IFN-alpha/beta pathway. Its function is as follows. Replicates the viral (+) and (-) RNA genome, and performs the capping of genomes in the cytoplasm. NS5 methylates viral RNA cap at guanine N-7 and ribose 2'-O positions. Besides its role in RNA genome replication, also prevents the establishment of cellular antiviral state by blocking the interferon-alpha/beta (IFN-alpha/beta) signaling pathway. Inhibits host TYK2 and STAT2 phosphorylation, thereby preventing activation of JAK-STAT signaling pathway. The polypeptide is Genome polyprotein (Dengue virus type 3 (strain China/80-2/1980) (DENV-3)).